Consider the following 910-residue polypeptide: Valine--tRNA ligase (910 aa).

Positions 46 to 56 (PNVTGSLHMGH) match the 'HIGH' region motif. A 'KMSKS' region motif is present at residues 539 to 543 (KMSKS). K542 lines the ATP pocket. Residues 845–909 (DLDILRNKIQ…QMLQERLKML (65 aa)) are a coiled coil.

The protein belongs to the class-I aminoacyl-tRNA synthetase family. ValS type 1 subfamily. Monomer.

The protein resides in the cytoplasm. It catalyses the reaction tRNA(Val) + L-valine + ATP = L-valyl-tRNA(Val) + AMP + diphosphate. In terms of biological role, catalyzes the attachment of valine to tRNA(Val). As ValRS can inadvertently accommodate and process structurally similar amino acids such as threonine, to avoid such errors, it has a 'posttransfer' editing activity that hydrolyzes mischarged Thr-tRNA(Val) in a tRNA-dependent manner. The sequence is that of Valine--tRNA ligase from Synechocystis sp. (strain ATCC 27184 / PCC 6803 / Kazusa).